Here is a 326-residue protein sequence, read N- to C-terminus: Intracellular serine protease (326 aa).

Positions 23 to 303 (PRGVEMIQAP…NGLLYLTAVE (281 aa)) constitute a Peptidase S8 domain. Active-site charge relay system residues include Asp49, His86, and Ser244.

It belongs to the peptidase S8 family.

Functionally, involved in the generation of beta- and alpha-amylases from the large amylase precursor. This Paenibacillus polymyxa (Bacillus polymyxa) protein is Intracellular serine protease (isp).